The primary structure comprises 628 residues: MYRFSDYDVIVVGAGHAGIEAALASARMGEAVLLITQTLDSAGRLSCNPSIGGISKGNIVREIDALGGEMGKLADASMIQYRLLNKSRGPAVQAPRVQADKFLYSQLAKHAIELEKNLHVFQDTVIDIVSSNTNESGYVEKGSVQYVKTERGREFSAKAVVLATGTFMEGKIYIGEYESPDGRLGERAAIGLGPALAKKGFTVGRLKTGTPMRILRRSFDSSLTEEQEADEIMRPFSFSNAEIHRPYAKCYITHTNQETHDIIRENLHRAALFSGKITGTGARYCPSIEDKIKKFPERDRHHVYIEPEGLNTEELYINGLSSSLPEDVQDRMIRTIPCFKDVIITRPAYAVDYAYVSPIQLSSDLQTRRIEGLFLAGQINGTSGYEEAGGQGIIAGINAALFSRSLKFKDEKYVPFVLKRDEAYIGVMIDDLVTQGVDEPYRMFTARAEYRLNLRHDTADERLTERAYQIGLQTKEASNRLKEKLLTREKIISLWKDIKITRDLIAKNPELKNHIGKSLADALHDPQVSLECICAIDENSKDYSAELLESAELEIRYEHYIAVQNRKIAKVKRMENTKIPADFDYDAVSGLSTESRTRLKEVRPETIGQASRIRGIRPSDIMLLSILL.

13-18 (GAGHAG) serves as a coordination point for FAD. 281–295 (GARYCPSIEDKIKKF) provides a ligand contact to NAD(+).

This sequence belongs to the MnmG family. In terms of assembly, homodimer. Heterotetramer of two MnmE and two MnmG subunits. The cofactor is FAD.

The protein localises to the cytoplasm. Functionally, NAD-binding protein involved in the addition of a carboxymethylaminomethyl (cmnm) group at the wobble position (U34) of certain tRNAs, forming tRNA-cmnm(5)s(2)U34. This chain is tRNA uridine 5-carboxymethylaminomethyl modification enzyme MnmG, found in Treponema denticola (strain ATCC 35405 / DSM 14222 / CIP 103919 / JCM 8153 / KCTC 15104).